Here is a 287-residue protein sequence, read N- to C-terminus: Glutamate racemase (287 aa).

A compositionally biased stretch (polar residues) spans Met1 to Ala15. The segment at Met1–Arg25 is disordered. Residues Asp32 to Ser33 and Tyr64 to Gly65 each bind substrate. Residue Cys96 is the Proton donor/acceptor of the active site. Asn97 to Thr98 contributes to the substrate binding site. The Proton donor/acceptor role is filled by Cys208. Thr209–His210 contacts substrate.

This sequence belongs to the aspartate/glutamate racemases family.

The enzyme catalyses L-glutamate = D-glutamate. The protein operates within cell wall biogenesis; peptidoglycan biosynthesis. Functionally, provides the (R)-glutamate required for cell wall biosynthesis. The protein is Glutamate racemase of Yersinia pseudotuberculosis serotype IB (strain PB1/+).